The sequence spans 698 residues: Colicin V secretion/processing ATP-binding protein CvaB (698 aa).

The 120-residue stretch at 26-145 (QTETAECGLA…RYFTGVALEV (120 aa)) folds into the Peptidase C39 domain. The active site involves cysteine 32. 7 helical membrane-spanning segments follow: residues 33–53 (GLAC…LIYL), 92–112 (VLKT…LVSV), 176–196 (LAKI…MPVG), 211–231 (GLLT…AATS), 289–311 (TSVI…MLLY), 315–334 (LTWI…LVTY), and 412–432 (IVIL…IGMF). The region spanning 176 to 458 (LAKIFCLSVV…LTSFLLQLRI (283 aa)) is the ABC transmembrane type-1 domain. Residues 492 to 698 (LETNGLSYRY…LRTVDRVISI (207 aa)) form the ABC transporter domain. Residue 526 to 533 (GASGAGKT) coordinates ATP.

It belongs to the ABC transporter superfamily. Colicin V exporter (TC 3.A.1.110.2) family.

It localises to the cell membrane. Its function is as follows. Involved, in conjunction with CvaA, in the secretion of colicin V. This is Colicin V secretion/processing ATP-binding protein CvaB (cvaB) from Escherichia coli.